We begin with the raw amino-acid sequence, 308 residues long: Zinc transporter ZIP9 (308 aa).

The chain crosses the membrane as a helical span at residues phenylalanine 4–isoleucine 24. N-linked (GlcNAc...) asparagine glycosylation occurs at asparagine 29. 5 consecutive transmembrane segments (helical) span residues leucine 35–valine 55, alanine 107–glycine 127, isoleucine 147–alanine 167, leucine 177–phenylalanine 197, and histidine 211–serine 231. Asparagine 242 carries an N-linked (GlcNAc...) asparagine glycan. 2 consecutive transmembrane segments (helical) span residues glycine 245–proline 265 and leucine 287–glutamine 307.

The protein belongs to the ZIP transporter (TC 2.A.5) family.

The protein resides in the golgi apparatus. Its subcellular location is the trans-Golgi network membrane. The protein localises to the cell membrane. It localises to the cytoplasm. It is found in the perinuclear region. The protein resides in the mitochondrion. Its subcellular location is the nucleus. It carries out the reaction Zn(2+)(in) = Zn(2+)(out). In terms of biological role, transports zinc ions across cell and organelle membranes into the cytoplasm and regulates intracellular zinc homeostasis. Participates in the zinc ions efflux out of the secretory compartments. Regulates intracellular zinc level, resulting in the enhancement of AKT1 and MAPK3/MAPK1 (Erk1/2) phosphorylation in response to the BCR activation. Also functions as a membrane androgen receptor that mediates, through a G protein, the non-classical androgen signaling pathway, characterized by the activation of MAPK3/MAPK1 (Erk1/2) and transcription factors CREB1 or ATF1. This pathway contributes to CLDN1 and CLDN5 expression and tight junction formation between adjacent Sertoli cells. Mediates androgen-induced vascular endothelial cell proliferation through activation of an inhibitory G protein leading to the AKT1 and MAPK3/MAPK1 (Erk1/2) activation which in turn modulate inhibition (phosphorylation) of GSK3B and CCND1 transcription. Moreover, has dual functions as a membrane-bound androgen receptor and as an androgen-dependent zinc transporter both of which are mediated through an inhibitory G protein (Gi) that mediates both MAP kinase and zinc signaling leading to the androgen-dependent apoptotic process. This chain is Zinc transporter ZIP9, found in Mus musculus (Mouse).